A 240-amino-acid polypeptide reads, in one-letter code: MSVAKPAHKRILLKLSGEALMGDDQFGINHDTIVRMVDEIAEVTRLGVEVAVVIGGGNIFRGVAGGSVGMDRATADYMGMLATVMNALALGDTMNKAGLTARVMSAIAIEQVVEPYVRPKALQYLEEGKVVIFAAGTGNPFFTTDTAAALRGAEIGAEVVLKATKVDGVYTADPKKDPQATRYSKISFDDAMTQNLGIMDATAFALCRDQKLPIKVFSILKHGALKRVVMGQDEGTLVYA.

Lys14–Gly17 is a binding site for ATP. Residue Gly56 coordinates UMP. The ATP site is built by Gly57 and Arg61. Residues Asp76 and Thr137–Thr144 contribute to the UMP site. Residues Thr164, Tyr170, and Asp173 each contribute to the ATP site.

Belongs to the UMP kinase family. As to quaternary structure, homohexamer.

Its subcellular location is the cytoplasm. It catalyses the reaction UMP + ATP = UDP + ADP. The protein operates within pyrimidine metabolism; CTP biosynthesis via de novo pathway; UDP from UMP (UMPK route): step 1/1. Its activity is regulated as follows. Inhibited by UTP. Functionally, catalyzes the reversible phosphorylation of UMP to UDP. This chain is Uridylate kinase, found in Albidiferax ferrireducens (strain ATCC BAA-621 / DSM 15236 / T118) (Rhodoferax ferrireducens).